The sequence spans 231 residues: Phosphatidylserine decarboxylase proenzyme (231 aa).

Ser-189 functions as the Schiff-base intermediate with substrate; via pyruvic acid in the catalytic mechanism. Residue Ser-189 is modified to Pyruvic acid (Ser); by autocatalysis.

It belongs to the phosphatidylserine decarboxylase family. PSD-A subfamily. As to quaternary structure, heterodimer of a large membrane-associated beta subunit and a small pyruvoyl-containing alpha subunit. Pyruvate is required as a cofactor. Is synthesized initially as an inactive proenzyme. Formation of the active enzyme involves a self-maturation process in which the active site pyruvoyl group is generated from an internal serine residue via an autocatalytic post-translational modification. Two non-identical subunits are generated from the proenzyme in this reaction, and the pyruvate is formed at the N-terminus of the alpha chain, which is derived from the carboxyl end of the proenzyme. The post-translation cleavage follows an unusual pathway, termed non-hydrolytic serinolysis, in which the side chain hydroxyl group of the serine supplies its oxygen atom to form the C-terminus of the beta chain, while the remainder of the serine residue undergoes an oxidative deamination to produce ammonia and the pyruvoyl prosthetic group on the alpha chain.

The protein resides in the cell membrane. It catalyses the reaction a 1,2-diacyl-sn-glycero-3-phospho-L-serine + H(+) = a 1,2-diacyl-sn-glycero-3-phosphoethanolamine + CO2. Its pathway is phospholipid metabolism; phosphatidylethanolamine biosynthesis; phosphatidylethanolamine from CDP-diacylglycerol: step 2/2. Its function is as follows. Catalyzes the formation of phosphatidylethanolamine (PtdEtn) from phosphatidylserine (PtdSer). The chain is Phosphatidylserine decarboxylase proenzyme from Chelativorans sp. (strain BNC1).